Reading from the N-terminus, the 530-residue chain is Autoinducer-2 kinase (530 aa).

The protein belongs to the FGGY kinase family.

It localises to the cytoplasm. The catalysed reaction is (S)-4,5-dihydroxypentane-2,3-dione + ATP = (2S)-2-hydroxy-3,4-dioxopentyl phosphate + ADP + H(+). Its function is as follows. Catalyzes the phosphorylation of autoinducer-2 (AI-2) to phospho-AI-2, which subsequently inactivates the transcriptional regulator LsrR and leads to the transcription of the lsr operon. Phosphorylates the ring-open form of (S)-4,5-dihydroxypentane-2,3-dione (DPD), which is the precursor to all AI-2 signaling molecules, at the C5 position. This is Autoinducer-2 kinase from Enterobacter sp. (strain 638).